A 97-amino-acid chain; its full sequence is Aspartyl/glutamyl-tRNA(Asn/Gln) amidotransferase subunit C (97 aa).

It belongs to the GatC family. As to quaternary structure, heterotrimer of A, B and C subunits.

The catalysed reaction is L-glutamyl-tRNA(Gln) + L-glutamine + ATP + H2O = L-glutaminyl-tRNA(Gln) + L-glutamate + ADP + phosphate + H(+). It carries out the reaction L-aspartyl-tRNA(Asn) + L-glutamine + ATP + H2O = L-asparaginyl-tRNA(Asn) + L-glutamate + ADP + phosphate + 2 H(+). Allows the formation of correctly charged Asn-tRNA(Asn) or Gln-tRNA(Gln) through the transamidation of misacylated Asp-tRNA(Asn) or Glu-tRNA(Gln) in organisms which lack either or both of asparaginyl-tRNA or glutaminyl-tRNA synthetases. The reaction takes place in the presence of glutamine and ATP through an activated phospho-Asp-tRNA(Asn) or phospho-Glu-tRNA(Gln). In Prochlorococcus marinus (strain MIT 9313), this protein is Aspartyl/glutamyl-tRNA(Asn/Gln) amidotransferase subunit C.